Here is a 297-residue protein sequence, read N- to C-terminus: HTH-type transcriptional regulator ArgP (297 aa).

Residues 4–60 (PDYRTLQALDAVIRERGFERAAQKLCITQSAVSQRIKQLENLFGQPLLVRTIPPRPT) form the HTH lysR-type domain. A DNA-binding region (H-T-H motif) is located at residues 21–40 (FERAAQKLCITQSAVSQRIK).

The protein belongs to the LysR transcriptional regulatory family. In terms of assembly, homodimer.

Functionally, controls the transcription of genes involved in arginine and lysine metabolism. This chain is HTH-type transcriptional regulator ArgP, found in Pectobacterium carotovorum subsp. carotovorum (strain PC1).